A 190-amino-acid polypeptide reads, in one-letter code: 3-isopropylmalate dehydratase small subunit (190 aa).

It belongs to the LeuD family. LeuD type 1 subfamily. Heterodimer of LeuC and LeuD.

The enzyme catalyses (2R,3S)-3-isopropylmalate = (2S)-2-isopropylmalate. Its pathway is amino-acid biosynthesis; L-leucine biosynthesis; L-leucine from 3-methyl-2-oxobutanoate: step 2/4. Its function is as follows. Catalyzes the isomerization between 2-isopropylmalate and 3-isopropylmalate, via the formation of 2-isopropylmaleate. The chain is 3-isopropylmalate dehydratase small subunit from Staphylococcus aureus (strain MSSA476).